The sequence spans 327 residues: tRNA uridine(34) hydroxylase (327 aa).

The Rhodanese domain occupies Leu-130 to Glu-224. Cys-184 acts as the Cysteine persulfide intermediate in catalysis.

This sequence belongs to the TrhO family.

It carries out the reaction uridine(34) in tRNA + AH2 + O2 = 5-hydroxyuridine(34) in tRNA + A + H2O. Its function is as follows. Catalyzes oxygen-dependent 5-hydroxyuridine (ho5U) modification at position 34 in tRNAs. The sequence is that of tRNA uridine(34) hydroxylase from Streptococcus suis (strain 98HAH33).